The sequence spans 364 residues: Anhydro-N-acetylmuramic acid kinase (364 aa).

11–18 (GSSLDGID) is an ATP binding site.

The protein belongs to the anhydro-N-acetylmuramic acid kinase family.

The catalysed reaction is 1,6-anhydro-N-acetyl-beta-muramate + ATP + H2O = N-acetyl-D-muramate 6-phosphate + ADP + H(+). The protein operates within amino-sugar metabolism; 1,6-anhydro-N-acetylmuramate degradation. It functions in the pathway cell wall biogenesis; peptidoglycan recycling. Its function is as follows. Catalyzes the specific phosphorylation of 1,6-anhydro-N-acetylmuramic acid (anhMurNAc) with the simultaneous cleavage of the 1,6-anhydro ring, generating MurNAc-6-P. Is required for the utilization of anhMurNAc either imported from the medium or derived from its own cell wall murein, and thus plays a role in cell wall recycling. This chain is Anhydro-N-acetylmuramic acid kinase, found in Pseudomonas syringae pv. syringae (strain B728a).